The primary structure comprises 352 residues: MRVDLFDFDLPDENIALRPANPRDQARFLIVRPDGSLMLEDRRVFELPSFLRAGDALVFNDTKVIPAQLEGVRIREGAERTPVSCTLHMRVAANRWKAFARPGKRIKQGDVIDFDGLSANVAEKGEAGEIDLEFAASGPDLDRAIAGVGHIPLPPYIAAKRPEDSQDRTDYQTIYAREEGAVAAPTAGLHFTPALFEALDKAGIERHFVTLHVGAGTFLPVKADDTDDHKMHQEIGHVSAETAEALNAVKARGGRIVSVGTTSLRLLESAASEDGRLLPWSDATGIFITPGYRFKAVDVLMTNFHLPKSTLFMLVSAFAGLETMRAAYAHAIETGYRFYSYGDSSLLFRKDK.

Belongs to the QueA family. As to quaternary structure, monomer.

The protein localises to the cytoplasm. It catalyses the reaction 7-aminomethyl-7-carbaguanosine(34) in tRNA + S-adenosyl-L-methionine = epoxyqueuosine(34) in tRNA + adenine + L-methionine + 2 H(+). It functions in the pathway tRNA modification; tRNA-queuosine biosynthesis. Transfers and isomerizes the ribose moiety from AdoMet to the 7-aminomethyl group of 7-deazaguanine (preQ1-tRNA) to give epoxyqueuosine (oQ-tRNA). This is S-adenosylmethionine:tRNA ribosyltransferase-isomerase from Allorhizobium ampelinum (strain ATCC BAA-846 / DSM 112012 / S4) (Agrobacterium vitis (strain S4)).